A 572-amino-acid polypeptide reads, in one-letter code: Proline--tRNA ligase (572 aa).

The protein belongs to the class-II aminoacyl-tRNA synthetase family. ProS type 1 subfamily. As to quaternary structure, homodimer.

Its subcellular location is the cytoplasm. It catalyses the reaction tRNA(Pro) + L-proline + ATP = L-prolyl-tRNA(Pro) + AMP + diphosphate. In terms of biological role, catalyzes the attachment of proline to tRNA(Pro) in a two-step reaction: proline is first activated by ATP to form Pro-AMP and then transferred to the acceptor end of tRNA(Pro). As ProRS can inadvertently accommodate and process non-cognate amino acids such as alanine and cysteine, to avoid such errors it has two additional distinct editing activities against alanine. One activity is designated as 'pretransfer' editing and involves the tRNA(Pro)-independent hydrolysis of activated Ala-AMP. The other activity is designated 'posttransfer' editing and involves deacylation of mischarged Ala-tRNA(Pro). The misacylated Cys-tRNA(Pro) is not edited by ProRS. The polypeptide is Proline--tRNA ligase (Shigella dysenteriae serotype 1 (strain Sd197)).